The following is a 1784-amino-acid chain: Sodium channel protein type 4 subunit alpha B (1784 aa).

At 1-130 the chain is on the cytoplasmic side; sequence MARLLPPTGT…RAAIRILIHS (130 aa). The tract at residues 29–48 is disordered; sequence AEEAAEQERMKEQNVKVAEE. An I repeat occupies 112 to 429; sequence CLSPFNPVRR…VVAMAYAEQN (318 aa). Residues 131–149 form a helical membrane-spanning segment; sequence LFSLVIMLTILTNCVFMAM. Residues 150-156 are Extracellular-facing; it reads SDPPGWS. Residues 157-177 traverse the membrane as a helical segment; it reads KILEYVFTGIYTFEAMVKVLS. The Cytoplasmic portion of the chain corresponds to 178 to 191; it reads RGFCIGDFTFLRDP. The chain crosses the membrane as a helical span at residues 192–209; sequence WNWLDFMVISMAYLTEFV. At 210–215 the chain is on the extracellular side; the sequence is DLGNIS. The N-linked (GlcNAc...) asparagine glycan is linked to Asn-213. A helical transmembrane segment spans residues 216–232; that stretch reads ALRTFRVLRALKTITVI. Residues 233–251 are Cytoplasmic-facing; that stretch reads PGLKTIVGALIQSVKKLAD. Residues 252 to 271 traverse the membrane as a helical segment; that stretch reads VMILTVFCLSVFALIGLQLF. Topologically, residues 272-366 are extracellular; it reads MGNLRQKCVL…PNYGYTSYDN (95 aa). A disulfide bridge connects residues Cys-279 and Cys-335. N-linked (GlcNAc...) asparagine glycans are attached at residues Asn-291, Asn-304, and Asn-337. Cys-344 and Cys-350 are disulfide-bonded. The segment at residues 367–391 is an intramembrane region (pore-forming); the sequence is FGWAFLALFRLMTQDFWENLFQLTL. Over 392 to 398 the chain is Extracellular; it reads RAAGKTY. A helical transmembrane segment spans residues 399 to 419; it reads MIFFVVIIFLGSFYLINLILA. The Cytoplasmic segment spans residues 420–568; it reads VVAMAYAEQN…RIVYLFVMDP (149 aa). Residues 455 to 478 form a disordered region; sequence EQKNGMVNGSKTSLSSKKKGDNDQ. The stretch at 550 to 821 is one II repeat; that stretch reads CCIPWVKFKR…QIAISRITRG (272 aa). A helical membrane pass occupies residues 569–587; that stretch reads FVDLGITLCIVLNTVFMAM. Over 588–598 the chain is Extracellular; it reads EHYPMSVHVEE. Residues 599–618 form a helical membrane-spanning segment; the sequence is VLAIGNLVFTGIFAAEMVLK. Residues 619 to 632 lie on the Cytoplasmic side of the membrane; the sequence is LIALDPYYYFQVGW. Residues 633-652 form a helical membrane-spanning segment; the sequence is NIFDSIIVTMSLVELMLADV. Residues 653–654 lie on the Extracellular side of the membrane; the sequence is EG. A helical membrane pass occupies residues 655 to 672; the sequence is LSVLRSFRLMRVFKLAKS. Over 673 to 688 the chain is Cytoplasmic; that stretch reads WPTLNMLIKIIGNSVG. A helical transmembrane segment spans residues 689 to 707; it reads ALGNLTLVLAIIVFIFAVV. At 708–736 the chain is on the extracellular side; sequence GMQLFGKSYTDSVCKISSDCELPRWHMAD. Residues Cys-721 and Cys-727 are joined by a disulfide bond. An intramembrane region (pore-forming) is located at residues 737-757; the sequence is FFHAFLIIFRVLCGEWIETMW. At 758–768 the chain is on the extracellular side; sequence DCMEVAGQGMC. A disulfide bridge links Cys-759 with Cys-768. Residues 769–787 traverse the membrane as a helical segment; sequence IIVFMMVMVIGNLVVLNLF. At 788 to 973 the chain is on the cytoplasmic side; sequence LALLLSSFSG…TCFAIVEHSY (186 aa). The disordered stretch occupies residues 870–928; the sequence is PIANGESDDDDGNGSSEDEDDEGRDINMKKKNGDESSTCSTVDKPPEVEDLVEEEEEDL. Over residues 875-892 the composition is skewed to acidic residues; sequence ESDDDDGNGSSEDEDDEG. The segment covering 893 to 903 has biased composition (basic and acidic residues); it reads RDINMKKKNGD. Over residues 917–928 the composition is skewed to acidic residues; the sequence is VEDLVEEEEEDL. The stretch at 954-1269 is one III repeat; the sequence is KGKAWWNFRK…KKYYNAMKKL (316 aa). A helical transmembrane segment spans residues 974–991; it reads FETFIIFMILLSSGALAF. Residues 992-1004 are Extracellular-facing; sequence EDIYIEQRRMIKI. A helical membrane pass occupies residues 1005 to 1023; it reads ILEYADQVFTYVFVVEMLL. At 1024–1037 the chain is on the cytoplasmic side; sequence KWVAYGFKVYFTNA. The chain crosses the membrane as a helical span at residues 1038–1056; the sequence is WCWLDFLIVDVSLISLTAN. Residues 1057 to 1064 lie on the Extracellular side of the membrane; the sequence is ILGYSELG. A helical transmembrane segment spans residues 1065–1083; the sequence is AIKSLRTLRALRPLRALSR. Topologically, residues 1084–1101 are cytoplasmic; sequence FEGMRVVVVNALVGAIPS. A helical membrane pass occupies residues 1102–1121; sequence IFNVLLVCLIFWLIFSIMGV. The Extracellular segment spans residues 1122–1173; that stretch reads NLFAGKFYYCFNETSEEVFDHNVVNNKTDCYELMEFHPEVRWMNGKINFDNV. A disulfide bridge links Cys-1131 with Cys-1151. Residues Asn-1133 and Asn-1147 are each glycosylated (N-linked (GlcNAc...) asparagine). Positions 1174–1195 form an intramembrane region, pore-forming; sequence GMGYLALLQVATFKGWMDIMYS. The Extracellular segment spans residues 1196–1212; it reads AVDSRAIESQPVYEANL. A helical transmembrane segment spans residues 1213-1234; it reads YMYIYFVIFIIFGSFFTLNLFI. Residues 1235 to 1297 lie on the Cytoplasmic side of the membrane; sequence GVIIDNFNQQ…LVFDFVTQQF (63 aa). The tract at residues 1253–1255 is important for rapid channel inactivation; sequence IFM. An IV repeat occupies 1278–1575; sequence IPRPTNCCQG…WEKFDPTASQ (298 aa). The chain crosses the membrane as a helical span at residues 1298–1315; that stretch reads FDIFIMVMICLNMVTMMV. Residues 1316–1326 are Extracellular-facing; that stretch reads ETDDQSAEIEE. The chain crosses the membrane as a helical span at residues 1327 to 1345; that stretch reads ILFYINFAFIILFTGECVL. Residues 1346 to 1357 are Cytoplasmic-facing; that stretch reads KITALRYHYFSI. A helical transmembrane segment spans residues 1358–1375; it reads GWNIFDFVVVILSILGIG. Residues 1376-1388 lie on the Extracellular side of the membrane; that stretch reads LADLIEKYFVSPT. The helical transmembrane segment at 1389-1405 threads the bilayer; the sequence is LFRVIRLARIGRVLRLI. The Cytoplasmic portion of the chain corresponds to 1406–1424; it reads RGAKGIRTLLFALMMSLPA. The helical transmembrane segment at 1425 to 1442 threads the bilayer; that stretch reads LFNIGLLLFLIMFIFSIF. Topologically, residues 1443-1464 are extracellular; the sequence is GMSNFAYVKKEVGIDDMMNFET. Positions 1465-1487 form an intramembrane region, pore-forming; it reads FGNSIICMFMITTSAGWDGLLAP. The Extracellular segment spans residues 1488-1516; it reads ILNSPPDCDPDVDNPGSTTRGNCGNAAVG. An intrachain disulfide couples Cys-1495 to Cys-1510. Residues 1517-1539 form a helical membrane-spanning segment; it reads IVFFCSYIVMSFLVVVNMYIAII. The Cytoplasmic segment spans residues 1540 to 1784; the sequence is LENFNVATEE…AADNLRESIV (245 aa). One can recognise an IQ domain in the interval 1669–1698; sequence EEVAASTIQRAYRSHILKRCVKQASYMYRD.

This sequence belongs to the sodium channel (TC 1.A.1.10) family. Nav1.4/SCN4A subfamily. As to quaternary structure, voltage-gated sodium (Nav) channels consist of an ion-conducting alpha subunit which is functional on its own associated with regulatory beta subunits. In terms of processing, lacks the cysteine which covalently binds the conotoxin GVIIJ. This cysteine (position 719) is speculated in other sodium channel subunits alpha to be implied in covalent binding with the sodium channel subunit beta-2 or beta-4. In terms of tissue distribution, expressed in skeletal muscle, heart, brain, spinal cord, and eye.

Its subcellular location is the cell membrane. It carries out the reaction Na(+)(in) = Na(+)(out). Functionally, pore-forming subunit of a voltage-gated sodium (Nav) channel that directly mediates the depolarizing phase of action potentials in excitable membranes. Navs, also called VGSCs (voltage-gated sodium channels) or VDSCs (voltage-dependent sodium channels), operate by switching between closed and open conformations depending on the voltage difference across the membrane. In the open conformation they allow Na(+) ions to selectively pass through the pore, along their electrochemical gradient. The influx of Na+ ions provokes membrane depolarization, initiating the propagation of electrical signals throughout cells and tissues. This Danio rerio (Zebrafish) protein is Sodium channel protein type 4 subunit alpha B (scn4ab).